The primary structure comprises 160 residues: Phosphopantetheine adenylyltransferase (160 aa).

Ser8 serves as a coordination point for substrate. ATP is bound by residues 8-9 and His16; that span reads SF. The substrate site is built by Lys40, Leu73, and Lys87. Residues 88–90, Glu98, and 122–128 each bind ATP; these read GLR and YGYVSST.

It belongs to the bacterial CoaD family. As to quaternary structure, homohexamer. Requires Mg(2+) as cofactor.

The protein localises to the cytoplasm. It carries out the reaction (R)-4'-phosphopantetheine + ATP + H(+) = 3'-dephospho-CoA + diphosphate. Its pathway is cofactor biosynthesis; coenzyme A biosynthesis; CoA from (R)-pantothenate: step 4/5. In terms of biological role, reversibly transfers an adenylyl group from ATP to 4'-phosphopantetheine, yielding dephospho-CoA (dPCoA) and pyrophosphate. This is Phosphopantetheine adenylyltransferase from Corynebacterium glutamicum (strain R).